Reading from the N-terminus, the 708-residue chain is Solute carrier family 15 member 1 (708 aa).

The chain crosses the membrane as a helical span at residues 1–21 (MGMSKSHSFFGYPLSIFFIVV). Residues 22 to 53 (NEFCERFSYYGMRAILILYFTNFISWDDNLST) are Extracellular-facing. A glycan (N-linked (GlcNAc...) asparagine) is linked at Asn50. A helical transmembrane segment spans residues 54 to 74 (AIYHTFVALCYLTPILGALIA). At 75 to 82 (DSWLGKFK) the chain is on the cytoplasmic side. The chain crosses the membrane as a helical span at residues 83–103 (TIVSLSIVYTIGQAVTSVSSI). At 104–118 (NDLTDHNHDGTPDSL) the chain is on the extracellular side. The helical transmembrane segment at 119-139 (PVHVVLSLIGLALIALGTGGI) threads the bilayer. Topologically, residues 140-161 (KPCVSAFGGDQFEEGQEKQRNR) are cytoplasmic. The chain crosses the membrane as a helical span at residues 162–182 (FFSIFYLAINAGSLLSTIITP). Topologically, residues 183–198 (MLRVQQCGIHSKQACY) are extracellular. Residues 199 to 219 (PLAFGVPAALMAVALIVFVLG) form a helical membrane-spanning segment. Residues 220–276 (SGMYKKFKPQGNIMGKVAKCIGFAIKNRFRHRSKAFPKREHWLDWAKEKYDERLISQ) are Cytoplasmic-facing. Residues 277 to 297 (IKMVTRVMFLYIPLPMFWALF) form a helical membrane-spanning segment. The Extracellular segment spans residues 298-327 (DQQGSRWTLQATTMSGKIGALEIQPDQMQT). Residues 328–348 (VNAILIVIMVPIFDAVLYPLI) form a helical membrane-spanning segment. Residues 349–361 (AKCGFNFTSLKKM) lie on the Cytoplasmic side of the membrane. Residues 362–382 (AVGMVLASMAFVVAAIVQVEI) form a helical membrane-spanning segment. At 383 to 584 (DKTLPVFPKG…SANTVNMALQ (202 aa)) the chain is on the extracellular side. Residues 383–584 (DKTLPVFPKG…SANTVNMALQ (202 aa)) are extracellular domain (ECD). Asn404, Asn408, Asn439, Asn509, Asn514, and Asn562 each carry an N-linked (GlcNAc...) asparagine glycan. The helical transmembrane segment at 585–605 (IPQYFLLTCGEVVFSVTGLEF) threads the bilayer. At 606–619 (SYSQAPSNMKSVLQ) the chain is on the cytoplasmic side. The chain crosses the membrane as a helical span at residues 620-640 (AGWLLTVAVGNIIVLIVAGAG). The Extracellular portion of the chain corresponds to 641-645 (QFSKQ). Residues 646-666 (WAEYILFAALLLVVCVIFAIM) form a helical membrane-spanning segment. The Cytoplasmic portion of the chain corresponds to 667–708 (ARFYTYINPAEIEAQFDEDEKKNRLEKSNPYFMSGANSQKQM).

This sequence belongs to the major facilitator superfamily. Proton-dependent oligopeptide transporter (POT/PTR) (TC 2.A.17) family. As to quaternary structure, interacts (via extracellular domain region) with trypsin. Expressed in small intestine.

The protein resides in the apical cell membrane. The catalysed reaction is a dipeptide(out) + H(+)(out) = a dipeptide(in) + H(+)(in). The enzyme catalyses an L-amino acid tripeptide(out) + H(+)(out) = an L-amino acid tripeptide(in) + H(+)(in). It catalyses the reaction L-alanyl-L-lysine(out) + H(+)(out) = L-alanyl-L-lysine(in) + H(+)(in). It carries out the reaction L-alanyl-L-proline(out) + H(+)(out) = L-alanyl-L-proline(in) + H(+)(in). The catalysed reaction is L-alanyl-L-valine(out) + H(+)(out) = L-alanyl-L-valine(in) + H(+)(in). The enzyme catalyses carnosine(out) + H(+)(out) = carnosine(in) + H(+)(in). It catalyses the reaction glycyl-L-glutamine(out) + H(+)(out) = glycyl-L-glutamine(in) + H(+)(in). It carries out the reaction glycyl-L-leucine(out) + H(+)(out) = glycyl-L-leucine(in) + H(+)(in). The catalysed reaction is glycyl-L-proline(out) + H(+)(out) = glycyl-L-proline(in) + H(+)(in). The enzyme catalyses glycyl-sarcosine(out) + H(+)(out) = glycyl-sarcosine(in) + H(+)(in). It catalyses the reaction L-leucyl-L-leucine(out) + H(+)(out) = L-leucyl-L-leucine(in) + H(+)(in). It carries out the reaction L-leucyl-L-proline(out) + H(+)(out) = L-leucyl-L-proline(in) + H(+)(in). The catalysed reaction is L-phenylalanyl-L-leucine(out) + H(+)(out) = L-phenylalanyl-L-leucine(in) + H(+)(in). The enzyme catalyses L-phenylalanyl-L-phenylalanine(out) + H(+)(out) = L-phenylalanyl-L-phenylalanine(in) + H(+)(in). It catalyses the reaction L-lysyl-glycine(out) + H(+)(out) = L-lysyl-glycine(in) + H(+)(in). It carries out the reaction L-tyrosylglycine(out) + H(+)(out) = L-tyrosylglycine(in) + H(+)(in). The catalysed reaction is L-alanyl-L-aspartate(out) + 2 H(+)(out) = L-alanyl-L-aspartate(in) + 2 H(+)(in). The enzyme catalyses L-aspartyl-glycine(out) + 2 H(+)(out) = L-aspartyl-glycine(in) + 2 H(+)(in). It catalyses the reaction glycyl-L-aspartate(out) + 2 H(+)(out) = glycyl-L-aspartate(in) + 2 H(+)(in). It carries out the reaction glycyl-L-glutamate(out) + 2 H(+)(out) = glycyl-L-glutamate(in) + 2 H(+)(in). The catalysed reaction is L-alanyl-L-leucyl-L-alanine(out) + H(+)(out) = L-alanyl-L-leucyl-L-alanine(in) + H(+)(in). The enzyme catalyses L-alanyl-L-prolylglycine(out) + H(+)(out) = L-alanyl-L-prolylglycine(in) + H(+)(in). It catalyses the reaction glycylglycyl-L-isoleucine(out) + H(+)(out) = glycylglycyl-L-isoleucine(in) + H(+)(in). It carries out the reaction glycylglycyl-L-proline(out) + H(+)(out) = glycylglycyl-L-proline(in) + H(+)(in). The catalysed reaction is L-methionyl-L-phenylalanyl-L-methionine(out) + H(+)(out) = L-methionyl-L-phenylalanyl-L-methionine(in) + H(+)(in). The enzyme catalyses N-acetyl-D-muramoyl-L-alanyl-D-isoglutamine(out) + 2 H(+)(out) = N-acetyl-D-muramoyl-L-alanyl-D-isoglutamine(in) + 2 H(+)(in). It catalyses the reaction N(alpha)-formyl-L-methionyl-L-leucyl-L-phenylalanine(out) + 2 H(+)(out) = N(alpha)-formyl-L-methionyl-L-leucyl-L-phenylalanine(in) + 2 H(+)(in). Its function is as follows. Electrogenic proton-coupled amino-acid transporter that transports oligopeptides of 2 to 4 amino acids with a preference for dipeptides. Transports neutral and monovalently charged peptides with a proton to peptide stoichiometry of 1:1 or 2:1. Primarily responsible for the absorption of dietary di- and tripeptides from the small intestinal lumen. Mediates transepithelial transport of muramyl and N-formylated bacterial dipeptides contributing to recognition of pathogenic bacteria by the mucosal immune system. The chain is Solute carrier family 15 member 1 from Homo sapiens (Human).